Consider the following 2789-residue polypeptide: Testis-expressed protein 15 (2789 aa).

A compositionally biased stretch (polar residues) spans 34–46 (HNNTGSSTVTTSK). Disordered regions lie at residues 34-99 (HNNT…SSEV), 169-191 (ENQNHSEEKAQRAQQESGNAYTK), 1063-1166 (FSSK…EHQP), 2303-2331 (KNISNSSKKRPSTVDKCEDSQEQQQDTTV), and 2351-2379 (KATFKHPRTTGSHPKSENKIVPSSCDSLK). The segment covering 47–59 (SIKDPRLMRREES) has biased composition (basic and acidic residues). Residues 80-98 (DNVNSEIKSTPSNSASSSE) show a composition bias toward polar residues. Basic and acidic residues predominate over residues 170–179 (NQNHSEEKAQ). Over residues 1063–1077 (FSSKRKYDKRRKKRA) the composition is skewed to basic residues. 2 stretches are compositionally biased toward low complexity: residues 1106 to 1116 (RKSMASSVSKS) and 1134 to 1160 (SQLPVSSTSQSTSQSVYYNSSVSNPSL).

The protein belongs to the TEX15 family. As to quaternary structure, interacts with PIWIL4 and PIWIL2. Expressed in testis, predominantly in germ cells. Low expression, if any, in ovary. Also expressed in several cancers.

The protein localises to the cytoplasm. It localises to the nucleus. Its function is as follows. Required during spermatogenesis for normal chromosome synapsis and meiotic recombination in germ cells. Necessary for formation of DMC1 and RAD51 foci on meiotic chromosomes, suggesting a specific role in DNA double-stranded break repair. Essential executor of PIWIL4-piRNA pathway directed transposon DNA methylation and silencing in the male embryonic germ cells. PIWIL4-piRNA binds to nascent transposon transcripts and interacts with TEX15, which may in turn recruit the epigenetic silencing machinery to the transposon loci. Not required for piRNA biosynthesis. The protein is Testis-expressed protein 15 (TEX15) of Homo sapiens (Human).